The sequence spans 572 residues: Probable terpene synthase 13 (572 aa).

Positions 326, 330, and 478 each coordinate Mg(2+). The short motif at Asp326 to Asp330 is the DDXXD motif element.

The protein belongs to the terpene synthase family. The cofactor is Mg(2+).

Probable sesquiterpene synthase. The polypeptide is Probable terpene synthase 13 (TPS13) (Ricinus communis (Castor bean)).